Reading from the N-terminus, the 592-residue chain is Potassium-transporting ATPase potassium-binding subunit (592 aa).

11 helical membrane passes run 7 to 27, 71 to 91, 136 to 156, 179 to 199, 287 to 307, 314 to 334, 411 to 431, 449 to 469, 473 to 493, 515 to 535, and 559 to 579; these read LQTV…GTFM, VLFN…QHLL, GLTV…IAVI, LYIL…QGVI, LEIL…GAMV, WTLL…LQGV, GLYT…LMIG, SVVT…IAMI, AVAA…YAFA, ILGA…VLAM, and FALW…FPAL.

Belongs to the KdpA family. As to quaternary structure, the system is composed of three essential subunits: KdpA, KdpB and KdpC.

Its subcellular location is the cell inner membrane. Part of the high-affinity ATP-driven potassium transport (or Kdp) system, which catalyzes the hydrolysis of ATP coupled with the electrogenic transport of potassium into the cytoplasm. This subunit binds the periplasmic potassium ions and delivers the ions to the membrane domain of KdpB through an intramembrane tunnel. In Geobacter sulfurreducens (strain ATCC 51573 / DSM 12127 / PCA), this protein is Potassium-transporting ATPase potassium-binding subunit.